We begin with the raw amino-acid sequence, 170 residues long: ATP synthase subunit b (170 aa).

A helical membrane pass occupies residues Q20–I42.

It belongs to the ATPase B chain family. In terms of assembly, F-type ATPases have 2 components, F(1) - the catalytic core - and F(0) - the membrane proton channel. F(1) has five subunits: alpha(3), beta(3), gamma(1), delta(1), epsilon(1). F(0) has three main subunits: a(1), b(2) and c(10-14). The alpha and beta chains form an alternating ring which encloses part of the gamma chain. F(1) is attached to F(0) by a central stalk formed by the gamma and epsilon chains, while a peripheral stalk is formed by the delta and b chains.

It is found in the cell membrane. Functionally, f(1)F(0) ATP synthase produces ATP from ADP in the presence of a proton or sodium gradient. F-type ATPases consist of two structural domains, F(1) containing the extramembraneous catalytic core and F(0) containing the membrane proton channel, linked together by a central stalk and a peripheral stalk. During catalysis, ATP synthesis in the catalytic domain of F(1) is coupled via a rotary mechanism of the central stalk subunits to proton translocation. In terms of biological role, component of the F(0) channel, it forms part of the peripheral stalk, linking F(1) to F(0). The chain is ATP synthase subunit b from Bacillus velezensis (strain DSM 23117 / BGSC 10A6 / LMG 26770 / FZB42) (Bacillus amyloliquefaciens subsp. plantarum).